The chain runs to 119 residues: UPF0344 protein lp_1373 (119 aa).

The next 4 membrane-spanning stretches (helical) occupy residues 1–21, 32–52, 60–80, and 92–112; these read MYLL…AIGL, FLIL…ALAI, WLTL…EVAF, and LVTL…GLHW.

Belongs to the UPF0344 family.

Its subcellular location is the cell membrane. In Lactiplantibacillus plantarum (strain ATCC BAA-793 / NCIMB 8826 / WCFS1) (Lactobacillus plantarum), this protein is UPF0344 protein lp_1373.